A 329-amino-acid polypeptide reads, in one-letter code: uncharacterized protein (329 aa).

The stretch at 56–247 forms a coiled coil; that stretch reads LNKEEQFQED…EAEKTHQAKL (192 aa).

This is an uncharacterized protein from Bos taurus (Bovine).